A 101-amino-acid polypeptide reads, in one-letter code: Doublesex- and mab-3-related transcription factor 1 (101 aa).

Positions 1-13 (SLIAERQRVMAAQ) form a DNA-binding region, DM. Low complexity predominate over residues 52–75 (CLLLESSSPTHSTSTVTTVSTSPS). The disordered stretch occupies residues 52-79 (CLLLESSSPTHSTSTVTTVSTSPSEGRM).

This sequence belongs to the DMRT family.

It localises to the nucleus. Its function is as follows. May be required for testis development. This Alligator mississippiensis (American alligator) protein is Doublesex- and mab-3-related transcription factor 1 (DMRT1).